We begin with the raw amino-acid sequence, 148 residues long: Small ribosomal subunit protein uS15 (148 aa).

This sequence belongs to the universal ribosomal protein uS15 family.

The polypeptide is Small ribosomal subunit protein uS15 (RPS13) (Encephalitozoon cuniculi (strain GB-M1) (Microsporidian parasite)).